The sequence spans 244 residues: tRNA (guanine-N(7)-)-methyltransferase (244 aa).

Residues Glu74, Glu99, Asp126, and Asp149 each coordinate S-adenosyl-L-methionine. Asp149 is an active-site residue. Substrate contacts are provided by residues Lys153, Asp185, and 222–225 (TKFE).

This sequence belongs to the class I-like SAM-binding methyltransferase superfamily. TrmB family.

It catalyses the reaction guanosine(46) in tRNA + S-adenosyl-L-methionine = N(7)-methylguanosine(46) in tRNA + S-adenosyl-L-homocysteine. The protein operates within tRNA modification; N(7)-methylguanine-tRNA biosynthesis. In terms of biological role, catalyzes the formation of N(7)-methylguanine at position 46 (m7G46) in tRNA. In Colwellia psychrerythraea (strain 34H / ATCC BAA-681) (Vibrio psychroerythus), this protein is tRNA (guanine-N(7)-)-methyltransferase.